The following is a 268-amino-acid chain: Microtubule-associated protein RP/EB family member 1 (268 aa).

Residue Ala-2 is modified to N-acetylalanine. Positions 14 to 116 (NLSRHDMLAW…FVQWFKKFFD (103 aa)) constitute a Calponin-homology (CH) domain. Lys-66 is modified (N6-crotonyllysine). Tyr-124 carries the post-translational modification Phosphotyrosine. The interval 124-268 (YDPVAARQGQ…GGPQEEQEEY (145 aa)) is interaction with MTUS2/TIP150. Over residues 146-160 (LNKPKKPLSSSSAAP) the composition is skewed to low complexity. Residues 146 to 191 (LNKPKKPLSSSSAAPQRPISTQRTAAAPKAGPGVVRKNPGVGNGDD) are disordered. Ser-155 and Ser-165 each carry phosphoserine. Residues 185–255 (GVGNGDDEAA…LYATDEGFVI (71 aa)) form the EB1 C-terminal domain. The segment at 185–268 (GVGNGDDEAA…GGPQEEQEEY (84 aa)) is interaction with CDK5RAP2. An interaction with APC region spans residues 206-211 (TVEDLE). Positions 208–268 (EDLEKERDFY…GGPQEEQEEY (61 aa)) are DCTN1-binding. Lys-220 is modified (N6-acetyllysine). The APC-binding stretch occupies residues 220–242 (KLRNIELICQENEGENDPVLQRI). The tract at residues 232–255 (EGENDPVLQRIVDILYATDEGFVI) is interaction with SKA1.

This sequence belongs to the MAPRE family. Homodimer. Heterodimer with MAPRE3. Interacts with DCTN1, DCTN2, TERF1 and dynein intermediate chain. Interaction with DIAPH1 and DIAPH2. Interacts (via C-terminal residues 206-211) with APC (via C-terminal residues 2674-2845); the interaction inhibits association with and bundling of F-actin. Interacts with CLASP2, DST, KIF2C and STIM1; probably required for their targeting to the growing microtubule plus ends. Interacts with MTUS2; interaction is direct and probably targets MTUS2 to microtubules. Interacts (via C-terminus) with SKA1 (via SXIP motif); the interaction is direct and stabilizes the kinetochore-microtubule attachment of the SKA1 complex. Interacts with APC2. Interacts with CLASP1. Interacts with CDK5RAP2. Interacts with MACF1. Interacts with RABL2/RABL2A; binds preferentially to GTP-bound RABL2. Interacts with KCNAB2. Interacts (via C-terminus) with CLIP1. Interacts with SLAIN2 and SLAIN1. Interacts with KIF18B; this interaction is required for efficient accumulation of KIF18B at microtubule plus ends. Interacts with MISP. Interacts with KNSTRN. Interacts with NCKAP5L. Interacts with CAMSAP2. Interacts with PDE4DIP isoform 13/MMG8/SMYLE; this interaction is required for its recruitment to the Golgi apparatus. Forms a pericentrosomal complex with AKAP9, CDK5RAP2 and PDE4DIP isoform 13/MMG8/SMYLE; within this complex, MAPRE1 binding to CDK5RAP2 may be mediated by PDE4DIP. Interacts with AKNA. Interacts with GAS2L1, GAS2L2, and GAS2L3. Interacts with RARRES1 and AGBL2. Post-translationally, acetylation at Lys-220 by KAT2B/PCAF promotes dynamic kinetochore-microtubule interactions in early mitosis. In terms of processing, crotonylated by KAT5 during mitosis, promoting astral microtubule plasticity and dynamic connection between astral microtubules and the cortex during mitotic chromosome segregation, thereby ensuring accurate spindle positioning in mitosis. Decrotonylated by HDAC3.

It is found in the cytoplasm. It localises to the cytoskeleton. Its subcellular location is the microtubule organizing center. The protein localises to the centrosome. The protein resides in the golgi apparatus. It is found in the spindle. It localises to the spindle pole. Functionally, plus-end tracking protein (+TIP) that binds to the plus-end of microtubules and regulates the dynamics of the microtubule cytoskeleton. Recruits other +TIP proteins to microtubules by binding to a conserved Ser-X-Leu-Pro (SXLP) motif in their polypeptide chains. Promotes cytoplasmic microtubule nucleation and elongation. Involved in mitotic spindle positioning by stabilizing microtubules and promoting dynamic connection between astral microtubules and the cortex during mitotic chromosome segregation. Assists chromosome alignment in metaphase by recruiting the SKA complex to the spindle and stabilizing its interactions with microtubule bundles (K-fibers). Also acts as a regulator of minus-end microtubule organization: interacts with the complex formed by AKAP9 and PDE4DIP, leading to recruit CAMSAP2 to the Golgi apparatus, thereby tethering non-centrosomal minus-end microtubules to the Golgi, an important step for polarized cell movement. Promotes elongation of CAMSAP2-decorated microtubule stretches on the minus-end of microtubules. Acts as a regulator of autophagosome transport via interaction with CAMSAP2. Functions downstream of Rho GTPases and DIAPH1 in stable microtubule formation. May play a role in cell migration. This is Microtubule-associated protein RP/EB family member 1 (MAPRE1) from Pongo abelii (Sumatran orangutan).